Here is a 123-residue protein sequence, read N- to C-terminus: Small ribosomal subunit protein uS12 (123 aa).

Aspartate 89 bears the 3-methylthioaspartic acid mark.

The protein belongs to the universal ribosomal protein uS12 family. Part of the 30S ribosomal subunit. Contacts proteins S8 and S17. May interact with IF1 in the 30S initiation complex.

With S4 and S5 plays an important role in translational accuracy. Its function is as follows. Interacts with and stabilizes bases of the 16S rRNA that are involved in tRNA selection in the A site and with the mRNA backbone. Located at the interface of the 30S and 50S subunits, it traverses the body of the 30S subunit contacting proteins on the other side and probably holding the rRNA structure together. The combined cluster of proteins S8, S12 and S17 appears to hold together the shoulder and platform of the 30S subunit. This Geotalea uraniireducens (strain Rf4) (Geobacter uraniireducens) protein is Small ribosomal subunit protein uS12.